Here is a 180-residue protein sequence, read N- to C-terminus: Crossover junction endodeoxyribonuclease RuvC (180 aa).

Residues Asp7, Glu66, and Asp138 contribute to the active site. Residues Asp7, Glu66, and Asp138 each coordinate Mg(2+).

The protein belongs to the RuvC family. As to quaternary structure, homodimer which binds Holliday junction (HJ) DNA. The HJ becomes 2-fold symmetrical on binding to RuvC with unstacked arms; it has a different conformation from HJ DNA in complex with RuvA. In the full resolvosome a probable DNA-RuvA(4)-RuvB(12)-RuvC(2) complex forms which resolves the HJ. The cofactor is Mg(2+).

The protein resides in the cytoplasm. It carries out the reaction Endonucleolytic cleavage at a junction such as a reciprocal single-stranded crossover between two homologous DNA duplexes (Holliday junction).. In terms of biological role, the RuvA-RuvB-RuvC complex processes Holliday junction (HJ) DNA during genetic recombination and DNA repair. Endonuclease that resolves HJ intermediates. Cleaves cruciform DNA by making single-stranded nicks across the HJ at symmetrical positions within the homologous arms, yielding a 5'-phosphate and a 3'-hydroxyl group; requires a central core of homology in the junction. The consensus cleavage sequence is 5'-(A/T)TT(C/G)-3'. Cleavage occurs on the 3'-side of the TT dinucleotide at the point of strand exchange. HJ branch migration catalyzed by RuvA-RuvB allows RuvC to scan DNA until it finds its consensus sequence, where it cleaves and resolves the cruciform DNA. In Paraburkholderia phymatum (strain DSM 17167 / CIP 108236 / LMG 21445 / STM815) (Burkholderia phymatum), this protein is Crossover junction endodeoxyribonuclease RuvC.